Reading from the N-terminus, the 379-residue chain is Glutamate 5-kinase (379 aa).

Lys19 contributes to the ATP binding site. Residues Ser59, Asp146, and Asn158 each coordinate substrate. ATP contacts are provided by residues 178–179 and 220–226; these read TD and TGGMATK. The PUA domain maps to 285–363; that stretch reads SGDIIIDDGA…KDIISILGHD (79 aa).

Belongs to the glutamate 5-kinase family.

It is found in the cytoplasm. The enzyme catalyses L-glutamate + ATP = L-glutamyl 5-phosphate + ADP. It functions in the pathway amino-acid biosynthesis; L-proline biosynthesis; L-glutamate 5-semialdehyde from L-glutamate: step 1/2. In terms of biological role, catalyzes the transfer of a phosphate group to glutamate to form L-glutamate 5-phosphate. This chain is Glutamate 5-kinase, found in Vibrio campbellii (strain ATCC BAA-1116).